Reading from the N-terminus, the 459-residue chain is tRNA-2-methylthio-N(6)-dimethylallyladenosine synthase (459 aa).

Positions 1-116 constitute an MTTase N-terminal domain; the sequence is MRAHLITYGC…IGKALETNER (116 aa). [4Fe-4S] cluster is bound by residues Cys10, Cys46, Cys79, Cys148, Cys152, and Cys155. The region spanning 134-367 is the Radical SAM core domain; that stretch reads PQGKLQAHLT…IAKQKEWSAR (234 aa). A TRAM domain is found at 370–433; it reads AAKVGTIQEV…PHMLYGRLIG (64 aa).

The protein belongs to the methylthiotransferase family. MiaB subfamily. In terms of assembly, monomer. It depends on [4Fe-4S] cluster as a cofactor.

Its subcellular location is the cytoplasm. The enzyme catalyses N(6)-dimethylallyladenosine(37) in tRNA + (sulfur carrier)-SH + AH2 + 2 S-adenosyl-L-methionine = 2-methylsulfanyl-N(6)-dimethylallyladenosine(37) in tRNA + (sulfur carrier)-H + 5'-deoxyadenosine + L-methionine + A + S-adenosyl-L-homocysteine + 2 H(+). In terms of biological role, catalyzes the methylthiolation of N6-(dimethylallyl)adenosine (i(6)A), leading to the formation of 2-methylthio-N6-(dimethylallyl)adenosine (ms(2)i(6)A) at position 37 in tRNAs that read codons beginning with uridine. This is tRNA-2-methylthio-N(6)-dimethylallyladenosine synthase from Deinococcus geothermalis (strain DSM 11300 / CIP 105573 / AG-3a).